The chain runs to 341 residues: 3-keto-steroid reductase/17-beta-hydroxysteroid dehydrogenase 7 (341 aa).

Over 1–229 (MRKVVLITGA…VACPGTALTN (229 aa)) the chain is Extracellular. 8 to 15 (TGASSGIG) serves as a coordination point for NAD(+). Residue asparagine 37 is glycosylated (N-linked (GlcNAc...) asparagine). Residue serine 171 coordinates substrate. An N-linked (GlcNAc...) asparagine glycan is attached at asparagine 178. Tyrosine 193 (proton acceptor) is an active-site residue. Asparagine 229 carries an N-linked (GlcNAc...) asparagine glycan. Residues 230-250 (LTYGILPPFIWTLLMPAILLL) form a helical membrane-spanning segment. Over 251 to 341 (RFFANAFTLT…NQARLSGSCL (91 aa)) the chain is Cytoplasmic.

Belongs to the short-chain dehydrogenases/reductases (SDR) family. ERG27 subfamily. Binds to the short form of prolactin receptor. In terms of processing, phosphorylated. Highly expressed in adrenal gland, liver, lung and thymus. Expressed in breast, ovaries, pituitary gland, pregnant uterus, prostate, kidney, lymph node, small intestine, spinal cord and trachea. Weakly expressed in all other tissues tested. In terms of tissue distribution, expressed in eye ciliary epithelial cells and neuroendocrine cells.

It is found in the endoplasmic reticulum membrane. The enzyme catalyses 17beta-estradiol + NADP(+) = estrone + NADPH + H(+). It catalyses the reaction a 3beta-hydroxysteroid + NADP(+) = a 3-oxosteroid + NADPH + H(+). It carries out the reaction 3-dehydro-4alpha-methylzymosterol + NADPH + H(+) = 4alpha-methylzymosterol + NADP(+). The catalysed reaction is zymosterone + NADPH + H(+) = zymosterol + NADP(+). The enzyme catalyses 4alpha-methyl-5alpha-cholest-8-en-3-one + NADPH + H(+) = 4alpha-methyl-5alpha-cholest-8-en-3beta-ol + NADP(+). It catalyses the reaction 4alpha-methyl-5alpha-cholest-7-en-3beta-ol + NADP(+) = 4alpha-methyl-5alpha-cholest-7-en-3-one + NADPH + H(+). It carries out the reaction 5alpha-cholest-8-en-3-one + NADPH + H(+) = 5alpha-cholest-8-en-3beta-ol + NADP(+). The catalysed reaction is 5alpha-androstane-3beta,17beta-diol + NADP(+) = 17beta-hydroxy-5alpha-androstan-3-one + NADPH + H(+). The enzyme catalyses progesterone + NADPH + H(+) = 3beta-hydroxypregn-4-ene-20-one + NADP(+). The protein operates within steroid biosynthesis; estrogen biosynthesis. Its pathway is steroid biosynthesis; zymosterol biosynthesis; zymosterol from lanosterol: step 5/6. With respect to regulation, estradiol 17-beta-dehydrogenase and dihydrotestosterone oxidoreductase activities are selectively inhibited by 4-methyl-4-aza-5alpha-androstane derivatives, such as 17beta-[(N-Heptyl)methylamino]-4-aza-5r-androstan-3-one and 17beta-(N-Decylformamido)-4-aza-5r-androstan-3-one. Functionally, bifunctional enzyme involved in steroid-hormone metabolism and cholesterol biosynthesis. Catalyzes the NADP(H)-dependent reduction of estrogens and androgens and regulates the biological potency of these steroids. Converts estrone (E1) to a more potent estrogen, 17beta-estradiol (E2). Converts dihydrotestosterone (DHT) to its inactive form 5a-androstane-3b,17b-diol. Converts moderately progesterone to 3beta-hydroxypregn-4-ene-20-one, leading to its inactivation. Additionally, participates in the post-squalene cholesterol biosynthesis, as a 3-ketosteroid reductase. In terms of biological role, does not have enzymatic activities toward E1 and DHT. This chain is 3-keto-steroid reductase/17-beta-hydroxysteroid dehydrogenase 7 (HSD17B7), found in Homo sapiens (Human).